The sequence spans 125 residues: Large ribosomal subunit protein bL12 (125 aa).

Belongs to the bacterial ribosomal protein bL12 family. In terms of assembly, homodimer. Part of the ribosomal stalk of the 50S ribosomal subunit. Forms a multimeric L10(L12)X complex, where L10 forms an elongated spine to which 2 to 4 L12 dimers bind in a sequential fashion. Binds GTP-bound translation factors.

Its function is as follows. Forms part of the ribosomal stalk which helps the ribosome interact with GTP-bound translation factors. Is thus essential for accurate translation. In Rickettsia africae (strain ESF-5), this protein is Large ribosomal subunit protein bL12.